The primary structure comprises 401 residues: uncharacterized protein (401 aa).

7 helical membrane passes run 44-64, 69-89, 99-119, 130-150, 201-221, 246-266, and 286-306; these read LKYT…LVFI, LYSF…FVLL, LVFN…LIIF, ILST…SIIP, FIYA…LYIL, ILFY…SFVA, and LFFS…GTVV.

The protein resides in the cell membrane. This is an uncharacterized protein from Mycoplasma pneumoniae (strain ATCC 29342 / M129 / Subtype 1) (Mycoplasmoides pneumoniae).